Here is a 550-residue protein sequence, read N- to C-terminus: Glucose-6-phosphate isomerase (550 aa).

The active-site Proton donor is Glu-356. Active-site residues include His-387 and Lys-515.

It belongs to the GPI family.

The protein localises to the cytoplasm. The catalysed reaction is alpha-D-glucose 6-phosphate = beta-D-fructose 6-phosphate. The protein operates within carbohydrate biosynthesis; gluconeogenesis. It participates in carbohydrate degradation; glycolysis; D-glyceraldehyde 3-phosphate and glycerone phosphate from D-glucose: step 2/4. Catalyzes the reversible isomerization of glucose-6-phosphate to fructose-6-phosphate. The chain is Glucose-6-phosphate isomerase from Syntrophobacter fumaroxidans (strain DSM 10017 / MPOB).